Consider the following 217-residue polypeptide: Flagellar L-ring protein 2 (217 aa).

The signal sequence occupies residues 1–15 (MRILLALTWLAWLGA). A lipid anchor (N-palmitoyl cysteine) is attached at C16. C16 is lipidated: S-diacylglycerol cysteine.

Belongs to the FlgH family. As to quaternary structure, the basal body constitutes a major portion of the flagellar organelle and consists of four rings (L,P,S, and M) mounted on a central rod.

It is found in the cell outer membrane. The protein resides in the bacterial flagellum basal body. Functionally, assembles around the rod to form the L-ring and probably protects the motor/basal body from shearing forces during rotation. This chain is Flagellar L-ring protein 2, found in Burkholderia thailandensis (strain ATCC 700388 / DSM 13276 / CCUG 48851 / CIP 106301 / E264).